We begin with the raw amino-acid sequence, 211 residues long: Pyruvate dehydrogenase E1 component subunit beta, mitochondrial (211 aa).

Phosphotyrosine is present on Y31. Residues I48, A96, I97, D99, and N101 each contribute to the K(+) site.

As to quaternary structure, heterotetramer of two PDHA1 and two PDHB subunits. The heterotetramer interacts with DLAT, and is part of the multimeric pyruvate dehydrogenase complex that contains multiple copies of pyruvate dehydrogenase (E1), dihydrolipoamide acetyltransferase (DLAT, E2) and lipoamide dehydrogenase (DLD, E3). These subunits are bound to an inner core composed of about 48 DLAT and 12 PDHX molecules. Interacts with DLAT. The cofactor is thiamine diphosphate.

It is found in the mitochondrion matrix. It catalyses the reaction N(6)-[(R)-lipoyl]-L-lysyl-[protein] + pyruvate + H(+) = N(6)-[(R)-S(8)-acetyldihydrolipoyl]-L-lysyl-[protein] + CO2. Its function is as follows. The pyruvate dehydrogenase complex catalyzes the overall conversion of pyruvate to acetyl-CoA and CO(2), and thereby links the glycolytic pathway to the tricarboxylic cycle. The sequence is that of Pyruvate dehydrogenase E1 component subunit beta, mitochondrial from Mesocricetus auratus (Golden hamster).